Consider the following 153-residue polypeptide: Prostaglandin E synthase (153 aa).

Residues 1 to 13 (MPPPSLAMVSGQA) lie on the Lumenal side of the membrane. The helical transmembrane segment at 14-42 (LPAFLLCSTLLVIKMYAVAVITGQVRLRK) threads the bilayer. Arginine 39 serves as a coordination point for glutathione. At 43–61 (KAFANPEDALRHGGLQFHR) the chain is on the cytoplasmic side. The helical transmembrane segment at 62–91 (DDQDVERCLRAHRNDMETIYPFLFLGLVYS) threads the bilayer. 74-78 (RNDME) contacts glutathione. Residues 92–96 (FLGPD) lie on the Lumenal side of the membrane. The helical transmembrane segment at 97 to 120 (PFVAQMHFLVFFLGRMVHTVAYLG) threads the bilayer. Histidine 114 and tyrosine 118 together coordinate glutathione. Residues 121 to 124 (KLRA) are Cytoplasmic-facing. Residues 125–153 (PTRSLAYTVAQLPCASMALQIVWEAARHL) form a helical membrane-spanning segment. 127–131 (RSLAY) serves as a coordination point for glutathione.

It belongs to the MAPEG family. In terms of assembly, homotrimer. Glutathione is required as a cofactor.

Its subcellular location is the membrane. The protein resides in the cytoplasm. It is found in the perinuclear region. It carries out the reaction prostaglandin H2 = prostaglandin E2. The enzyme catalyses 2-glyceryl-prostaglandin H2 = 2-glyceryl-prostaglandin E2. The catalysed reaction is prostaglandin G2 = (15S)-15-hydroperoxy-prostaglandin E2. It catalyses the reaction 1-chloro-2,4-dinitrobenzene + glutathione = 2,4-dinitrophenyl-S-glutathione + chloride + H(+). It carries out the reaction (5S)-hydroperoxy-(6E,8Z,11Z,14Z)-eicosatetraenoate + 2 glutathione = (5S)-hydroxy-(6E,8Z,11Z,14Z)-eicosatetraenoate + glutathione disulfide + H2O. The protein operates within lipid metabolism; prostaglandin biosynthesis. Terminal enzyme of the cyclooxygenase (COX)-2-mediated prostaglandin E2 (PGE2) biosynthetic pathway. Catalyzes the glutathione-dependent oxidoreduction of prostaglandin endoperoxide H2 (PGH2) to prostaglandin E2 (PGE2) in response to inflammatory stimuli. Plays a key role in inflammation response, fever and pain. Also catalyzes the oxidoreduction of endocannabinoids into prostaglandin glycerol esters and PGG2 into 15-hydroperoxy-PGE2. In addition, displays low glutathione transferase and glutathione-dependent peroxidase activities, toward 1-chloro-2,4-dinitrobenzene and 5-hydroperoxyicosatetraenoic acid (5-HPETE), respectively. The protein is Prostaglandin E synthase (PTGES) of Equus caballus (Horse).